The primary structure comprises 364 residues: 3-isopropylmalate dehydrogenase (364 aa).

Residue 76-89 (GPKWEKLPPNEQPE) coordinates NAD(+). Substrate contacts are provided by arginine 97, arginine 107, arginine 136, and aspartate 225. Mg(2+)-binding residues include aspartate 225, aspartate 249, and aspartate 253. Residue 283–295 (GSAPDIAGKGIAN) participates in NAD(+) binding.

The protein belongs to the isocitrate and isopropylmalate dehydrogenases family. LeuB type 1 subfamily. Homodimer. It depends on Mg(2+) as a cofactor. Mn(2+) serves as cofactor.

It localises to the cytoplasm. It catalyses the reaction (2R,3S)-3-isopropylmalate + NAD(+) = 4-methyl-2-oxopentanoate + CO2 + NADH. It functions in the pathway amino-acid biosynthesis; L-leucine biosynthesis; L-leucine from 3-methyl-2-oxobutanoate: step 3/4. Catalyzes the oxidation of 3-carboxy-2-hydroxy-4-methylpentanoate (3-isopropylmalate) to 3-carboxy-4-methyl-2-oxopentanoate. The product decarboxylates to 4-methyl-2 oxopentanoate. In Shewanella oneidensis (strain ATCC 700550 / JCM 31522 / CIP 106686 / LMG 19005 / NCIMB 14063 / MR-1), this protein is 3-isopropylmalate dehydrogenase.